We begin with the raw amino-acid sequence, 503 residues long: Guanosine-5'-triphosphate,3'-diphosphate pyrophosphatase (503 aa).

The protein belongs to the GppA/Ppx family. GppA subfamily.

The enzyme catalyses guanosine 3'-diphosphate 5'-triphosphate + H2O = guanosine 3',5'-bis(diphosphate) + phosphate + H(+). It participates in purine metabolism; ppGpp biosynthesis; ppGpp from GTP: step 2/2. In terms of biological role, catalyzes the conversion of pppGpp to ppGpp. Guanosine pentaphosphate (pppGpp) is a cytoplasmic signaling molecule which together with ppGpp controls the 'stringent response', an adaptive process that allows bacteria to respond to amino acid starvation, resulting in the coordinated regulation of numerous cellular activities. The sequence is that of Guanosine-5'-triphosphate,3'-diphosphate pyrophosphatase from Pseudoalteromonas atlantica (strain T6c / ATCC BAA-1087).